The primary structure comprises 681 residues: Probable L-type lectin-domain containing receptor kinase S.7 (681 aa).

An N-terminal signal peptide occupies residues 1-21 (MSLSRKLLVIFFTWITALSMS). Residues 22–305 (KPIFVSSDNM…PSKKRRHRHN (284 aa)) are Extracellular-facing. The interval 30–265 (NMNFTFKSFT…IHLIENWSFK (236 aa)) is legume-lectin like. Residues Asn-32, Asn-42, Asn-86, Asn-121, Asn-135, Asn-261, and Asn-281 are each glycosylated (N-linked (GlcNAc...) asparagine). A helical transmembrane segment spans residues 306 to 326 (LAIGLGISCPVLICLALFVFG). Residues 327–681 (YFTLKKWKSV…EGDSIVYVVS (355 aa)) are Cytoplasmic-facing. The region spanning 365–643 (FHSSRVIGRG…RVLQILNNEI (279 aa)) is the Protein kinase domain. Residues 371–379 (IGRGAFGNV) and Lys-394 contribute to the ATP site. The active-site Proton acceptor is Asp-493.

It in the C-terminal section; belongs to the protein kinase superfamily. Ser/Thr protein kinase family. The protein in the N-terminal section; belongs to the leguminous lectin family.

It localises to the cell membrane. The enzyme catalyses L-seryl-[protein] + ATP = O-phospho-L-seryl-[protein] + ADP + H(+). The catalysed reaction is L-threonyl-[protein] + ATP = O-phospho-L-threonyl-[protein] + ADP + H(+). Involved in resistance response to the pathogenic oomycetes Phytophthora infestans and Phytophthora capsici. The sequence is that of Probable L-type lectin-domain containing receptor kinase S.7 from Arabidopsis thaliana (Mouse-ear cress).